Here is a 361-residue protein sequence, read N- to C-terminus: Fructose-1,6-bisphosphatase class 1 2 (361 aa).

Glu110, Asp134, Leu136, and Asp137 together coordinate Mg(2+). Residues 137–140 (DGSS), Asn231, Tyr264, and Lys294 contribute to the substrate site. Glu300 is a Mg(2+) binding site.

This sequence belongs to the FBPase class 1 family. In terms of assembly, homotetramer. Mg(2+) serves as cofactor.

The protein resides in the cytoplasm. The catalysed reaction is beta-D-fructose 1,6-bisphosphate + H2O = beta-D-fructose 6-phosphate + phosphate. Its pathway is carbohydrate biosynthesis; gluconeogenesis. This Salinibacter ruber (strain DSM 13855 / M31) protein is Fructose-1,6-bisphosphatase class 1 2.